A 351-amino-acid polypeptide reads, in one-letter code: Holliday junction branch migration complex subunit RuvB (351 aa).

A large ATPase domain (RuvB-L) region spans residues 4-199 (DNPQFNQWYE…FGIINSLQYY (196 aa)). Residues Leu38, Arg39, Gly80, Lys83, Thr84, Thr85, 146–148 (EDY), Arg189, Tyr199, and Arg236 each bind ATP. Position 84 (Thr84) interacts with Mg(2+). The tract at residues 200–270 (TPEELQQIVV…IVTIGLDKLR (71 aa)) is small ATPAse domain (RuvB-S). The head domain (RuvB-H) stretch occupies residues 273 to 351 (NRGLDETDHK…HLGHAYQRKL (79 aa)). Arg328 and Arg333 together coordinate DNA.

It belongs to the RuvB family. In terms of assembly, homohexamer. Forms an RuvA(8)-RuvB(12)-Holliday junction (HJ) complex. HJ DNA is sandwiched between 2 RuvA tetramers; dsDNA enters through RuvA and exits via RuvB. An RuvB hexamer assembles on each DNA strand where it exits the tetramer. Each RuvB hexamer is contacted by two RuvA subunits (via domain III) on 2 adjacent RuvB subunits; this complex drives branch migration. In the full resolvosome a probable DNA-RuvA(4)-RuvB(12)-RuvC(2) complex forms which resolves the HJ.

Its subcellular location is the cytoplasm. The enzyme catalyses ATP + H2O = ADP + phosphate + H(+). The RuvA-RuvB-RuvC complex processes Holliday junction (HJ) DNA during genetic recombination and DNA repair, while the RuvA-RuvB complex plays an important role in the rescue of blocked DNA replication forks via replication fork reversal (RFR). RuvA specifically binds to HJ cruciform DNA, conferring on it an open structure. The RuvB hexamer acts as an ATP-dependent pump, pulling dsDNA into and through the RuvAB complex. RuvB forms 2 homohexamers on either side of HJ DNA bound by 1 or 2 RuvA tetramers; 4 subunits per hexamer contact DNA at a time. Coordinated motions by a converter formed by DNA-disengaged RuvB subunits stimulates ATP hydrolysis and nucleotide exchange. Immobilization of the converter enables RuvB to convert the ATP-contained energy into a lever motion, pulling 2 nucleotides of DNA out of the RuvA tetramer per ATP hydrolyzed, thus driving DNA branch migration. The RuvB motors rotate together with the DNA substrate, which together with the progressing nucleotide cycle form the mechanistic basis for DNA recombination by continuous HJ branch migration. Branch migration allows RuvC to scan DNA until it finds its consensus sequence, where it cleaves and resolves cruciform DNA. In Leuconostoc mesenteroides subsp. mesenteroides (strain ATCC 8293 / DSM 20343 / BCRC 11652 / CCM 1803 / JCM 6124 / NCDO 523 / NBRC 100496 / NCIMB 8023 / NCTC 12954 / NRRL B-1118 / 37Y), this protein is Holliday junction branch migration complex subunit RuvB.